We begin with the raw amino-acid sequence, 375 residues long: Nucleosome assembly protein 1-like 4 (375 aa).

The segment at 1–31 is disordered; the sequence is MADHSFSDGVPSDSVEAAKNASNTEKLTDQV. Ala2 carries the N-acetylalanine modification. Residues Ser5, Ser7, and Ser12 each carry the phosphoserine modification. A compositionally biased stretch (polar residues) spans 20-31; it reads NASNTEKLTDQV. A Phosphothreonine modification is found at Thr51. 2 positions are modified to phosphoserine: Ser53 and Ser54. The residue at position 58 (Thr58) is a Phosphothreonine. Lys105 carries the post-translational modification N6-acetyllysine. Positions 116-137 are disordered; sequence PTDAESEWHSENEEEEKLAGDM. Residues 121-137 show a composition bias toward basic and acidic residues; the sequence is SEWHSENEEEEKLAGDM. At Ser125 the chain carries Phosphoserine. Lys146 is subject to N6-acetyllysine. A Nuclear localization signal motif is present at residues 265-271; the sequence is IKKKQKH. Ser304 carries the phosphoserine modification. Positions 339–375 are disordered; it reads AIEDDDNFEEGEEGEEEELEGDEEGEDEDDAEINPKV.

The protein belongs to the nucleosome assembly protein (NAP) family. Interacts with core (H2A, CD2APH2B, H3, H4) and linker (H1) histones. In terms of assembly, (Microbial infection) Interacts with Chikungunya virus non-structural protein 3 (via C-terminus). Phosphorylated at the G0/G1 boundary but it is not phosphorylated in S-phase. Phosphorylated protein remains in the cytoplasm in a complex with histones during the G0/G1 transition, whereas dephosphorylation triggers its transport into the nucleus at the G1/S-boundary. Post-translationally, polyglutamylated by TTLL4, a modification that occurs exclusively on glutamate residues and results in polyglutamate chains on the gamma-carboxyl group. Some residues may also be monoglycylated but not polyglycylated due to the absence of functional TTLL10 in human. As to expression, ubiquitous. Biallelically expressed in fetal and adult tissues. Highest levels in testis.

It localises to the nucleus. The protein localises to the cytoplasm. Acts as a histone chaperone in nucleosome assembly. In Homo sapiens (Human), this protein is Nucleosome assembly protein 1-like 4.